Here is a 106-residue protein sequence, read N- to C-terminus: Small ribosomal subunit protein uS17 (106 aa).

It belongs to the universal ribosomal protein uS17 family. Part of the 30S ribosomal subunit.

Its function is as follows. One of the primary rRNA binding proteins, it binds specifically to the 5'-end of 16S ribosomal RNA. The chain is Small ribosomal subunit protein uS17 from Picrophilus torridus (strain ATCC 700027 / DSM 9790 / JCM 10055 / NBRC 100828 / KAW 2/3).